The following is a 352-amino-acid chain: Protein Wnt-3a (352 aa).

An N-terminal signal peptide occupies residues 1–18 (MAPLGYLLVLCSLKQALG). Disulfide bonds link Cys77-Cys88, Cys128-Cys136, Cys138-Cys155, Cys203-Cys217, Cys205-Cys212, Cys281-Cys312, Cys297-Cys307, Cys311-Cys351, Cys327-Cys342, Cys329-Cys339, and Cys334-Cys335. Residue Asn87 is glycosylated (N-linked (GlcNAc...) asparagine). The O-palmitoleoyl serine; by PORCN moiety is linked to residue Ser209. The N-linked (GlcNAc...) asparagine glycan is linked to Asn298.

This sequence belongs to the Wnt family. In terms of assembly, forms a soluble 1:1 complex with AFM; this prevents oligomerization and is required for prolonged biological activity. The complex with AFM may represent the physiological form in body fluids. Homooligomer; disulfide-linked, leading to inactivation. Interacts with APCDD1 and WLS. Component of the Wnt-Fzd-LRP5-LRP6 signaling complex that contains a WNT protein, a FZD protein and LRP5 or LRP6. Interacts directly in the complex with LRP6. Interacts with PORCN. Interacts with glypican GPC3. Interacts with PKD1 (via extracellular domain). Interacts with FZD5. Post-translationally, proteolytic processing by TIKI1 and TIKI2 promotes oxidation and formation of large disulfide-bond oligomers, leading to inactivation of WNT3A. In terms of processing, disulfide bonds have critical and distinct roles in secretion and activity. Loss of each conserved cysteine in WNT3A results in high molecular weight oxidized Wnt oligomers, which are formed through inter-Wnt disulfide bonding. Palmitoleoylation by PORCN is required for efficient binding to frizzled receptors. Palmitoleoylation is required for proper trafficking to cell surface, vacuolar acidification is critical to release palmitoleoylated WNT3A from WLS in secretory vesicles. Depalmitoleoylated by NOTUM, leading to inhibit Wnt signaling pathway, possibly by promoting disulfide bond formation and oligomerization. As to expression, dorsal portion of the neural tube (developing roof plate), and mesenchyme tissue surrounding the umbilical veins.

It localises to the secreted. The protein localises to the extracellular space. The protein resides in the extracellular matrix. Ligand for members of the frizzled family of seven transmembrane receptors. Functions in the canonical Wnt signaling pathway that results in activation of transcription factors of the TCF/LEF family. Required for normal embryonic mesoderm development and formation of caudal somites. Required for normal morphogenesis of the developing neural tube. Mediates self-renewal of the stem cells at the bottom on intestinal crypts (in vitro). This is Protein Wnt-3a (Wnt3a) from Mus musculus (Mouse).